The sequence spans 294 residues: Nucleotide-binding protein Tfu_2020 (294 aa).

Position 18-25 (18-25 (GMSGAGRS)) interacts with ATP. 69–72 (DVRS) is a binding site for GTP.

This sequence belongs to the RapZ-like family.

Displays ATPase and GTPase activities. This chain is Nucleotide-binding protein Tfu_2020, found in Thermobifida fusca (strain YX).